A 311-amino-acid chain; its full sequence is Oxygen-dependent coproporphyrinogen-III oxidase (311 aa).

Residue Ser-100 coordinates substrate. The a divalent metal cation site is built by His-104 and His-114. His-114 serves as the catalytic Proton donor. 116 to 118 lines the substrate pocket; sequence NVR. 2 residues coordinate a divalent metal cation: His-153 and His-183. Residues 248–283 form an important for dimerization region; sequence YAEFNLVYDRGTLFGLQSGGRTESILMSLPPIVHWE. 266 to 268 is a substrate binding site; that stretch reads GGR.

It belongs to the aerobic coproporphyrinogen-III oxidase family. In terms of assembly, homodimer. A divalent metal cation serves as cofactor.

Its subcellular location is the cytoplasm. It carries out the reaction coproporphyrinogen III + O2 + 2 H(+) = protoporphyrinogen IX + 2 CO2 + 2 H2O. It functions in the pathway porphyrin-containing compound metabolism; protoporphyrin-IX biosynthesis; protoporphyrinogen-IX from coproporphyrinogen-III (O2 route): step 1/1. Functionally, involved in the heme biosynthesis. Catalyzes the aerobic oxidative decarboxylation of propionate groups of rings A and B of coproporphyrinogen-III to yield the vinyl groups in protoporphyrinogen-IX. This chain is Oxygen-dependent coproporphyrinogen-III oxidase, found in Legionella pneumophila (strain Corby).